The following is a 107-amino-acid chain: Glutaconyl-CoA decarboxylase subunit delta (107 aa).

The helical transmembrane segment at 10–32 threads the bilayer; it reads MINMTIVFGVLIVLGILMVLIHA. Residues 37–60 are disordered; the sequence is KKVQGKKKPVVAKPAPSAAASKRQ. A compositionally biased stretch (low complexity) spans 47 to 57; sequence VAKPAPSAAAS.

The protein belongs to the OadG family. In terms of assembly, heterooctamer consisting of two alpha, two beta, two gamma and two delta subunits.

Its subcellular location is the cell membrane. The enzyme catalyses (2E)-glutaconyl-CoA + Na(+)(in) + H(+) = (2E)-butenoyl-CoA + Na(+)(out) + CO2. Its pathway is amino-acid degradation; L-glutamate degradation via hydroxyglutarate pathway; crotonoyl-CoA from L-glutamate: step 5/5. Part of the primary sodium pump glutaconyl-CoA decarboxylase (GCD). Possible membrane anchor for the alpha subunit. The sequence is that of Glutaconyl-CoA decarboxylase subunit delta (gcdD) from Acidaminococcus fermentans (strain ATCC 25085 / DSM 20731 / CCUG 9996 / CIP 106432 / VR4).